The primary structure comprises 124 residues: Small ribosomal subunit protein uS12 (124 aa).

Residues 11-20 (GRKRLKKKSK) show a composition bias toward basic residues. The tract at residues 11-30 (GRKRLKKKSKSPALENNPQK) is disordered. D89 carries the post-translational modification 3-methylthioaspartic acid. The disordered stretch occupies residues 105-124 (EGVANRRQSRSRYGAKKPKK). Residues 111–124 (RQSRSRYGAKKPKK) are compositionally biased toward basic residues.

This sequence belongs to the universal ribosomal protein uS12 family. As to quaternary structure, part of the 30S ribosomal subunit. Contacts proteins S8 and S17. May interact with IF1 in the 30S initiation complex.

In terms of biological role, with S4 and S5 plays an important role in translational accuracy. Interacts with and stabilizes bases of the 16S rRNA that are involved in tRNA selection in the A site and with the mRNA backbone. Located at the interface of the 30S and 50S subunits, it traverses the body of the 30S subunit contacting proteins on the other side and probably holding the rRNA structure together. The combined cluster of proteins S8, S12 and S17 appears to hold together the shoulder and platform of the 30S subunit. This is Small ribosomal subunit protein uS12 from Kosmotoga olearia (strain ATCC BAA-1733 / DSM 21960 / TBF 19.5.1).